Here is a 411-residue protein sequence, read N- to C-terminus: Probable UDP-arabinose 4-epimerase 3 (411 aa).

Positions methionine 1–asparagine 13 are enriched in polar residues. The segment at methionine 1–glutamate 22 is disordered. Residues methionine 1 to asparagine 31 are Cytoplasmic-facing. Residues valine 32–leucine 50 form a helical; Signal-anchor for type II membrane protein membrane-spanning segment. Residues lysine 51–serine 411 are Lumenal-facing. An NAD(+)-binding site is contributed by histidine 71–leucine 102. Tyrosine 219 serves as the catalytic Proton acceptor.

Belongs to the NAD(P)-dependent epimerase/dehydratase family. NAD(+) serves as cofactor.

Its subcellular location is the golgi apparatus. The protein localises to the golgi stack membrane. The catalysed reaction is UDP-beta-L-arabinopyranose = UDP-alpha-D-xylose. Its pathway is nucleotide-sugar biosynthesis; UDP-L-arabinose biosynthesis; UDP-L-arabinose from UDP-alpha-D-xylose: step 1/1. It participates in cell wall biogenesis; cell wall polysaccharide biosynthesis. The protein is Probable UDP-arabinose 4-epimerase 3 of Arabidopsis thaliana (Mouse-ear cress).